The chain runs to 452 residues: Trigger factor (452 aa).

The 86-residue stretch at 171–256 folds into the PPIase FKBP-type domain; it reads GDRVKVNFKG…ATAIETPEEK (86 aa).

It belongs to the FKBP-type PPIase family. Tig subfamily.

It localises to the cytoplasm. It catalyses the reaction [protein]-peptidylproline (omega=180) = [protein]-peptidylproline (omega=0). In terms of biological role, involved in protein export. Acts as a chaperone by maintaining the newly synthesized protein in an open conformation. Functions as a peptidyl-prolyl cis-trans isomerase. This chain is Trigger factor, found in Bradyrhizobium sp. (strain BTAi1 / ATCC BAA-1182).